We begin with the raw amino-acid sequence, 208 residues long: MKVVEVKHPLIKHKIGLMREGDISTKRFRELATEVGSLLTYEATSDFETEKVTINGWNGPVEVDQIKGKKVTVVPILRAGLGMMDGVLEHIPSARISVVGIYRDEETLEPVPYFNKLASNIDERIALVVDPMLATGGSMIATLDLLKEKGCKNFKILVLVAAPEGIAALEKAHPDVELYTAAIDEKLNDKGYIIPGLGDAGDKIFGTK.

5-phospho-alpha-D-ribose 1-diphosphate contacts are provided by residues arginine 78, arginine 103, and 130–138; that span reads DPMLATGGS. Residues isoleucine 193 and 198 to 200 each bind uracil; that span reads GDA. Residue aspartate 199 participates in 5-phospho-alpha-D-ribose 1-diphosphate binding.

This sequence belongs to the UPRTase family. Mg(2+) serves as cofactor.

It carries out the reaction UMP + diphosphate = 5-phospho-alpha-D-ribose 1-diphosphate + uracil. It participates in pyrimidine metabolism; UMP biosynthesis via salvage pathway; UMP from uracil: step 1/1. Allosterically activated by GTP. Functionally, catalyzes the conversion of uracil and 5-phospho-alpha-D-ribose 1-diphosphate (PRPP) to UMP and diphosphate. This chain is Uracil phosphoribosyltransferase, found in Aliivibrio salmonicida (strain LFI1238) (Vibrio salmonicida (strain LFI1238)).